Reading from the N-terminus, the 474-residue chain is GTPase Der (474 aa).

EngA-type G domains follow at residues leucine 2 to glutamate 166 and leucine 212 to serine 385. GTP-binding positions include glycine 8–serine 15, aspartate 55–valine 59, asparagine 118–aspartate 121, glycine 218–serine 225, aspartate 265–leucine 269, and asparagine 330–aspartate 333. One can recognise a KH-like domain in the interval serine 386–threonine 470.

The protein belongs to the TRAFAC class TrmE-Era-EngA-EngB-Septin-like GTPase superfamily. EngA (Der) GTPase family. As to quaternary structure, associates with the 50S ribosomal subunit.

Functionally, GTPase that plays an essential role in the late steps of ribosome biogenesis. This chain is GTPase Der, found in Chlamydia caviae (strain ATCC VR-813 / DSM 19441 / 03DC25 / GPIC) (Chlamydophila caviae).